We begin with the raw amino-acid sequence, 144 residues long: Large ribosomal subunit protein uL15 (144 aa).

Positions 1-52 are disordered; sequence MRLNTISSAPGAKQAEKRVGRGIGSGWGKTCGRGHKGQKSRSGGFHKVGFEG. Gly residues predominate over residues 21-31; the sequence is RGIGSGWGKTC.

Belongs to the universal ribosomal protein uL15 family. Part of the 50S ribosomal subunit.

Functionally, binds to the 23S rRNA. In Nitrosococcus oceani (strain ATCC 19707 / BCRC 17464 / JCM 30415 / NCIMB 11848 / C-107), this protein is Large ribosomal subunit protein uL15.